The following is a 586-amino-acid chain: Arginine--tRNA ligase (586 aa).

The 'HIGH' region motif lies at 128 to 138; sequence ANPTGPLHVGH.

This sequence belongs to the class-I aminoacyl-tRNA synthetase family. In terms of assembly, monomer.

The protein localises to the cytoplasm. The enzyme catalyses tRNA(Arg) + L-arginine + ATP = L-arginyl-tRNA(Arg) + AMP + diphosphate. In Thioalkalivibrio sulfidiphilus (strain HL-EbGR7), this protein is Arginine--tRNA ligase.